Reading from the N-terminus, the 336-residue chain is Large ribosomal subunit protein mL39 (336 aa).

Residues 60-126 (EKIEVKHVGK…TKSCEIKFLT (67 aa)) enclose the TGS domain. Position 123 is an N6-acetyllysine (Lys123).

It belongs to the mitochondrion-specific ribosomal protein mL39 family. As to quaternary structure, component of the mitochondrial ribosome large subunit (39S) which comprises a 16S rRNA and about 50 distinct proteins.

It is found in the mitochondrion. The chain is Large ribosomal subunit protein mL39 (Mrpl39) from Mus musculus (Mouse).